The primary structure comprises 482 residues: MSQNKTLTTASGPPVADNQNSRSAGPRGPLLLDDFHLIEKLAHFNRENIPERRVHAKGSGAYGTFTVTQDITQYTSAKLFDSVGKQTPTFLRFSTVGGERGSADTERDPRGFALKFYTEEGNWDIVGNNTPVFFIRDPLKFPDFIHTQKRLPQSNLKSAQMMWDFWSHSPEALHQVTILFSDRGIPDGYRHMHGFGSHTYSLINAKGERHWVKWHYKTKQGIKNLAPADAARLAGTDPDYAQRDLFGAIERGDFPKWRVCIQIMTEAQANAHYENPFDVTKTWSQKEFPLIEVGELELNRNPLNYFAEVEQAAFGPSNMVPGVGLSPDRMLQGRVFAYADAHRYRVGTNHQQLPVNAPRSPVNSYQRDGSMAFGSNGGAAPNYEPNSYADAPKQAPQYAEPALALSGAADRYDHREDTDYYSHAGALFRLMNDEQKALLINNIAGAMAGVSSDVVQRQLQYFFKADPAYGEGIASALGVSLN.

Residues 1-23 are compositionally biased toward polar residues; that stretch reads MSQNKTLTTASGPPVADNQNSRS. Residues 1–28 are disordered; it reads MSQNKTLTTASGPPVADNQNSRSAGPRG. Catalysis depends on residues H55 and N128. Y338 provides a ligand contact to heme. Residues 370–395 are disordered; it reads SMAFGSNGGAAPNYEPNSYADAPKQA.

This sequence belongs to the catalase family. Heme serves as cofactor.

The enzyme catalyses 2 H2O2 = O2 + 2 H2O. Its function is as follows. Decomposes hydrogen peroxide into water and oxygen; serves to protect cells from the toxic effects of hydrogen peroxide. The chain is Catalase (cat) from Onchocerca volvulus endobacterium.